The chain runs to 443 residues: Sperm-associated antigen 4 protein (443 aa).

A compositionally biased stretch (low complexity) spans 1–36; it reads MRRSPRSGSAASSHNHTPNFYSENSNSSHSATSGDS. Residues 1 to 107 form a disordered region; sequence MRRSPRSGSA…VRGGASEPSG (107 aa). 2 helical membrane passes run 137 to 157 and 168 to 188; these read FLSLLFQVLSMVLSLAVDGLV and FLFTAVSLLSIFLAALWWGLL. Positions 203–244 form a coiled coil; it reads TLSQYHHRVHSQGQQLQQLQAELNKLHKEVSSVRAAHSERVA. The SUN domain maps to 267–427; that stretch reads GASIDLEKTS…YRVRAHGVRT (161 aa).

As to quaternary structure, self-associates. Interacts with ODF1. May associate with microtubules. Interacts with SUN3 and SYNE1; suggesting the formation of a spermatogenesis-specific LINC complex; a SUN domain-based heterotrimer of SPAG4 and SUN3 may associate with SYNE1. Interacts with SEPT12 and LMNB1; during spermatogenesis. As to expression, isoform 1 is testis specific and is exclusively expressed in spermatids.

The protein resides in the membrane. The protein localises to the cytoplasm. Its subcellular location is the cytoskeleton. It is found in the nucleus envelope. It localises to the nucleus inner membrane. The protein resides in the flagellum axoneme. Functionally, involved in spermatogenesis. Required for sperm head formation but not required to establish and maintain general polarity of the sperm head. Required for anchoring and organization of the manchette. Required for targeting of SUN3 and probably SYNE1 through a probable SUN1:SYNE3 LINC complex to the nuclear envelope and involved in accurate posterior sperm head localization of the complex. May anchor SUN3 the nuclear envelope. Involved in maintenance of the nuclear envelope integrity. May assist the organization and assembly of outer dense fibers (ODFs), a specific structure of the sperm tail. This Mus musculus (Mouse) protein is Sperm-associated antigen 4 protein (Spag4).